The chain runs to 120 residues: NAD(P)H-quinone oxidoreductase subunit 3 (120 aa).

The next 3 membrane-spanning stretches (helical) occupy residues 10-30, 64-84, and 89-109; these read FLGF…TNLI, MFAL…PWAV, and LGLL…IALA.

Belongs to the complex I subunit 3 family. In terms of assembly, NDH-1 can be composed of about 15 different subunits; different subcomplexes with different compositions have been identified which probably have different functions.

It is found in the cellular thylakoid membrane. It carries out the reaction a plastoquinone + NADH + (n+1) H(+)(in) = a plastoquinol + NAD(+) + n H(+)(out). It catalyses the reaction a plastoquinone + NADPH + (n+1) H(+)(in) = a plastoquinol + NADP(+) + n H(+)(out). Its function is as follows. NDH-1 shuttles electrons from an unknown electron donor, via FMN and iron-sulfur (Fe-S) centers, to quinones in the respiratory and/or the photosynthetic chain. The immediate electron acceptor for the enzyme in this species is believed to be plastoquinone. Couples the redox reaction to proton translocation, and thus conserves the redox energy in a proton gradient. Cyanobacterial NDH-1 also plays a role in inorganic carbon-concentration. In Prochlorococcus marinus (strain AS9601), this protein is NAD(P)H-quinone oxidoreductase subunit 3.